Consider the following 86-residue polypeptide: Large ribosomal subunit protein bL31 (86 aa).

The disordered stretch occupies residues 65–86 (YGMASSDSSEQKDKSSEEKKES). Over residues 73 to 86 (SEQKDKSSEEKKES) the composition is skewed to basic and acidic residues.

The protein belongs to the bacterial ribosomal protein bL31 family. Type A subfamily. In terms of assembly, part of the 50S ribosomal subunit.

Functionally, binds the 23S rRNA. This chain is Large ribosomal subunit protein bL31, found in Prochlorococcus marinus (strain NATL2A).